The chain runs to 508 residues: Pancreatic alpha-amylase 2a5 (508 aa).

A signal peptide spans 1-15; sequence MKFVLLLSLIGFCWA. A Pyrrolidone carboxylic acid modification is found at Q16. 3 disulfides stabilise this stretch: C43/C101, C85/C130, and C156/C172. Residues N115, R170, and D179 each contribute to the Ca(2+) site. A chloride-binding site is contributed by R207. D209 serves as the catalytic Nucleophile. Residue H213 coordinates Ca(2+). E245 (proton donor) is an active-site residue. Positions 310 and 349 each coordinate chloride. Cystine bridges form between C390-C396 and C462-C474.

It belongs to the glycosyl hydrolase 13 family. Monomer. The cofactor is Ca(2+). Requires chloride as cofactor.

It is found in the secreted. The protein localises to the extracellular space. It catalyses the reaction Endohydrolysis of (1-&gt;4)-alpha-D-glucosidic linkages in polysaccharides containing three or more (1-&gt;4)-alpha-linked D-glucose units.. This Mus musculus (Mouse) protein is Pancreatic alpha-amylase 2a5.